A 288-amino-acid chain; its full sequence is Zinc finger protein ZAT9 (288 aa).

The C2H2-type 1 zinc-finger motif lies at 4–26 (YKCRVCFKSFVNGKALGGHMRSH). Disordered stretches follow at residues 20 to 82 (GGHM…LTRK), 101 to 123 (SQLG…DTTT), and 189 to 210 (GGHR…QRSE). Residues 37-52 (PSQLSYETESDVSSSD) are compositionally biased toward polar residues. C2H2-type zinc fingers lie at residues 173-195 (YKCE…RASH) and 224-246 (HECP…KRSH).

The protein localises to the nucleus. In terms of biological role, probable transcription factor that may be involved in stress responses. The protein is Zinc finger protein ZAT9 (ZAT9) of Arabidopsis thaliana (Mouse-ear cress).